The primary structure comprises 199 residues: Probable nicotinate-nucleotide adenylyltransferase (199 aa).

It belongs to the NadD family.

The catalysed reaction is nicotinate beta-D-ribonucleotide + ATP + H(+) = deamido-NAD(+) + diphosphate. It participates in cofactor biosynthesis; NAD(+) biosynthesis; deamido-NAD(+) from nicotinate D-ribonucleotide: step 1/1. Functionally, catalyzes the reversible adenylation of nicotinate mononucleotide (NaMN) to nicotinic acid adenine dinucleotide (NaAD). In Roseiflexus sp. (strain RS-1), this protein is Probable nicotinate-nucleotide adenylyltransferase.